The sequence spans 78 residues: Small ribosomal subunit protein uS15c (78 aa).

This sequence belongs to the universal ribosomal protein uS15 family. In terms of assembly, part of the 30S ribosomal subunit.

It is found in the plastid. The protein resides in the chloroplast. The polypeptide is Small ribosomal subunit protein uS15c (rps15-A) (Saccharum officinarum (Sugarcane)).